The sequence spans 147 residues: Large ribosomal subunit protein bL9 (147 aa).

Belongs to the bacterial ribosomal protein bL9 family.

Its function is as follows. Binds to the 23S rRNA. This is Large ribosomal subunit protein bL9 from Flavobacterium psychrophilum (strain ATCC 49511 / DSM 21280 / CIP 103535 / JIP02/86).